The following is a 367-amino-acid chain: uncharacterized protein (367 aa).

Residues 4 to 234 (LTFEHVKKSY…PANLFVAGFI (231 aa)) enclose the ABC transporter domain. 36-43 (GPSGCGKS) serves as a coordination point for ATP.

The protein belongs to the ABC transporter superfamily.

This is an uncharacterized protein from Bacillus subtilis (strain 168).